Consider the following 212-residue polypeptide: NAD(P)H-hydrate epimerase (212 aa).

A YjeF N-terminal domain is found at methionine 11–aspartate 212. Asparagine 60 to aspartate 64 contacts (6S)-NADPHX. Asparagine 61 and aspartate 123 together coordinate K(+). (6S)-NADPHX is bound by residues glycine 127 to alanine 133, tyrosine 138, and aspartate 156. Position 159 (serine 159) interacts with K(+).

It belongs to the NnrE/AIBP family. The cofactor is K(+).

It carries out the reaction (6R)-NADHX = (6S)-NADHX. The catalysed reaction is (6R)-NADPHX = (6S)-NADPHX. In terms of biological role, catalyzes the epimerization of the S- and R-forms of NAD(P)HX, a damaged form of NAD(P)H that is a result of enzymatic or heat-dependent hydration. This is a prerequisite for the S-specific NAD(P)H-hydrate dehydratase to allow the repair of both epimers of NAD(P)HX. The polypeptide is NAD(P)H-hydrate epimerase (Limosilactobacillus reuteri (strain ATCC 55730 / SD2112) (Lactobacillus reuteri)).